The primary structure comprises 638 residues: Methionine--tRNA ligase (638 aa).

Positions 12–22 match the 'HIGH' region motif; it reads YYPSDKLHIGH. Positions 127, 130, 144, and 147 each coordinate Zn(2+). Residues 296–300 carry the 'KMSKS' region motif; it reads KMSKS. K299 contributes to the ATP binding site. Positions 538 to 638 constitute a tRNA-binding domain; sequence DFSKVQLRVA…KDIESGSKIS (101 aa).

The protein belongs to the class-I aminoacyl-tRNA synthetase family. MetG type 2A subfamily. As to quaternary structure, homodimer. The cofactor is Zn(2+).

The protein resides in the cytoplasm. It catalyses the reaction tRNA(Met) + L-methionine + ATP = L-methionyl-tRNA(Met) + AMP + diphosphate. Functionally, is required not only for elongation of protein synthesis but also for the initiation of all mRNA translation through initiator tRNA(fMet) aminoacylation. This Caldanaerobacter subterraneus subsp. tengcongensis (strain DSM 15242 / JCM 11007 / NBRC 100824 / MB4) (Thermoanaerobacter tengcongensis) protein is Methionine--tRNA ligase (metG).